The sequence spans 589 residues: Capsid scaffolding protein (589 aa).

Active-site charge relay system residues include His-47, Ser-118, and His-142. Basic and acidic residues predominate over residues Glu-264–Gln-273. Residues Glu-264 to His-283 are disordered. Residues His-307–Pro-326 are interaction with pAP. Disordered regions lie at residues Arg-421–Tyr-478 and Ala-514–Gly-552. 2 consecutive short sequence motifs (nuclear localization signal) follow at residues Lys-428 to Arg-433 and Lys-453 to Lys-459. Positions Lys-453–His-462 are enriched in basic residues. Positions Ala-514–Ser-543 are enriched in low complexity. Residues Pro-569 to Glu-589 are interaction with major capsid protein.

It belongs to the herpesviridae capsid scaffolding protein family. As to quaternary structure, homomultimer. Interacts with major capsid protein. Exists in a monomer-dimer equilibrium with the dimer being the active species. In terms of processing, capsid scaffolding protein is cleaved by assemblin after formation of the spherical procapsid. As a result, the capsid obtains its mature, icosahedral shape. Cleavages occur at two or more sites: release (R-site) and maturation (M-site).

Its subcellular location is the host cytoplasm. The protein resides in the host nucleus. It carries out the reaction Cleaves -Ala-|-Ser- and -Ala-|-Ala- bonds in the scaffold protein.. Its function is as follows. Acts as a scaffold protein by binding major capsid protein in the cytoplasm, inducing the nuclear localization of both proteins. Multimerizes in the nucleus such as major capsid protein forms the icosahedral T=16 capsid. Autocatalytic cleavage releases the assembly protein, and subsequently abolishes interaction with major capsid protein. Cleavages products are evicted from the capsid before or during DNA packaging. Functionally, protease that plays an essential role in virion assembly within the nucleus. Catalyzes the cleavage of the assembly protein after formation of the spherical procapsid. By that cleavage, the capsid matures and gains its icosahedral shape. The cleavage sites seem to include -Ala-Ser-, -Ala-Ala-, as well as Ala-Thr bonds. Assemblin and cleavages products are evicted from the capsid before or during DNA packaging. Plays a major role in capsid assembly. Acts as a scaffold protein by binding major capsid protein. Multimerizes in the nucleus such as major capsid protein forms the icosahedral T=16 capsid. Cleaved by assemblin after capsid completion. The cleavages products are evicted from the capsid before or during DNA packaging. The polypeptide is Capsid scaffolding protein (UL80) (Simian cytomegalovirus (strain Colburn)).